A 151-amino-acid polypeptide reads, in one-letter code: UPF0756 membrane protein Moth_0120 (151 aa).

4 helical membrane-spanning segments follow: residues 6 to 26, 52 to 72, 75 to 95, and 111 to 131; these read VILILLMLLGILGRSNVIAAA, AGLIFLVVSVLVPFASGRVAP, MLQSFVSLPGLIAIASGIIAT, and MMIGMVIGSIIGVAFFGGIPV.

This sequence belongs to the UPF0756 family.

It localises to the cell membrane. This Moorella thermoacetica (strain ATCC 39073 / JCM 9320) protein is UPF0756 membrane protein Moth_0120.